Here is a 189-residue protein sequence, read N- to C-terminus: MIRFEIHGDNLTITDAIRNYIEEKVGKLERYFNNVPNAVAHVRVKTYSNSTTKIEVTIPLKDVTLRAEERHDDLYAGIDLITNKLERQVRKYKTRVNRKHRDRGDQDIFVAEVQESTTNNHADDIESENDIEIIRSKQFSLKPMDSEEAVLQMNLLGHDFFIFTDRETDGTSIVYRRKDGKYGLIETTE.

This sequence belongs to the HPF/YfiA ribosome-associated protein family. Long HPF subfamily. As to quaternary structure, interacts with 100S ribosomes.

The protein localises to the cytoplasm. Required for dimerization of active 70S ribosomes into 100S ribosomes in stationary phase; 100S ribosomes are translationally inactive and sometimes present during exponential growth. This chain is Ribosome hibernation promotion factor, found in Staphylococcus epidermidis (strain ATCC 35984 / DSM 28319 / BCRC 17069 / CCUG 31568 / BM 3577 / RP62A).